The sequence spans 1102 residues: Putative ISWI chromatin-remodeling complex subunit YPL216W (1102 aa).

The 109-residue stretch at 23–131 folds into the WAC domain; that stretch reads ETPWVIKESS…DTVCLKTIQK (109 aa). The segment at 271 to 301 is disordered; it reads ELYTPLTIPPESDVEPADWKETSETSETSET. Residues 375–435 enclose the DDT domain; sequence QFPTERLLVV…FLKTYNSKGS (61 aa). Positions 673–743 form a coiled coil; it reads CNGIRLKLDS…EDIAFLEAKL (71 aa).

Its subcellular location is the nucleus. May be required for the activity of an ISWI chromatin-remodeling complex. The polypeptide is Putative ISWI chromatin-remodeling complex subunit YPL216W (Saccharomyces cerevisiae (strain ATCC 204508 / S288c) (Baker's yeast)).